Reading from the N-terminus, the 421-residue chain is Histidine--tRNA ligase (421 aa).

This sequence belongs to the class-II aminoacyl-tRNA synthetase family. Homodimer.

The protein localises to the cytoplasm. The catalysed reaction is tRNA(His) + L-histidine + ATP = L-histidyl-tRNA(His) + AMP + diphosphate + H(+). The sequence is that of Histidine--tRNA ligase from Ureaplasma urealyticum serovar 10 (strain ATCC 33699 / Western).